Here is a 341-residue protein sequence, read N- to C-terminus: Spore photoproduct lyase (341 aa).

The 229-residue stretch at 76 to 304 folds into the Radical SAM core domain; it reads SKPSAEYAIP…ESKRKYKWGR (229 aa). Residues C90, C94, and C97 each coordinate [4Fe-4S] cluster. A DNA-binding region (H-T-H motif) is located at residues 217–234; the sequence is QAARKVAGAGYKLGFVVA.

This sequence belongs to the radical SAM superfamily. SPL family. In terms of assembly, monomer or homodimer. [4Fe-4S] cluster is required as a cofactor. Requires S-adenosyl-L-methionine as cofactor.

The enzyme catalyses (5R)-5,6-dihydro-5-(thymidin-7-yl)thymidine in DNA = a thymidine dimer in DNA. Involved in repair of UV radiation-induced DNA damage during spore germination. Can repair thymine dimer 5-thyminyl-5,6-dihydrothymine (known as spore photoproduct (SP)) by in situ monomerization of SP to two thymines. The chain is Spore photoproduct lyase (splG) from Geobacillus sp. (strain Y412MC61).